Consider the following 183-residue polypeptide: Ubiquitin-conjugating enzyme E2 H (183 aa).

One can recognise a UBC core domain in the interval 1-150; it reads MSSPSPGKRR…IKEYIQKYAT (150 aa). N6-acetyllysine is present on K60. C87 (glycyl thioester intermediate) is an active-site residue. A disordered region spans residues 152 to 183; the sequence is EALKEQEEGTGDSSSESSMSDFSEDEAQDMEL. The segment covering 163 to 172 has biased composition (low complexity); that stretch reads DSSSESSMSD. The span at 173–183 shows a compositional bias: acidic residues; the sequence is FSEDEAQDMEL.

This sequence belongs to the ubiquitin-conjugating enzyme family. Interacts with MAEA and WDR26, components of the CTLH complex that contains GID4, RANBP9 and/or RANBP10, MKLN1, MAEA, RMND5A (or alternatively its paralog RMND5B), GID8, ARMC8, WDR26 and YPEL5. Post-translationally, autoubiquitinated in vitro in the presence of NEDD4L.

It catalyses the reaction S-ubiquitinyl-[E1 ubiquitin-activating enzyme]-L-cysteine + [E2 ubiquitin-conjugating enzyme]-L-cysteine = [E1 ubiquitin-activating enzyme]-L-cysteine + S-ubiquitinyl-[E2 ubiquitin-conjugating enzyme]-L-cysteine.. The enzyme catalyses S-ubiquitinyl-[E1 ubiquitin-activating enzyme]-L-cysteine + [acceptor protein]-L-lysine = [E1 ubiquitin-activating enzyme]-L-cysteine + N(6)-monoubiquitinyl-[acceptor protein]-L-lysine.. It participates in protein modification; protein ubiquitination. Its function is as follows. Accepts ubiquitin from the E1 complex and catalyzes its covalent attachment to other proteins. E2 ubiquitin conjugating enzyme that transfers ubiquitin to MAEA, a core component of the CTLH E3 ubiquitin-protein ligase complex. In vitro catalyzes 'Lys-11'- and 'Lys-48'-linked polyubiquitination. Capable, in vitro, to ubiquitinate histone H2A. The sequence is that of Ubiquitin-conjugating enzyme E2 H (UBE2H) from Homo sapiens (Human).